Here is a 502-residue protein sequence, read N- to C-terminus: Phenylalanine--tRNA ligase alpha subunit (502 aa).

Residues threonine 339, 382–384 (QIE), and tyrosine 422 contribute to the L-phenylalanine site. Mg(2+) is bound at residue glutamate 424. L-phenylalanine is bound at residue phenylalanine 448.

This sequence belongs to the class-II aminoacyl-tRNA synthetase family. Phe-tRNA synthetase alpha subunit type 2 subfamily. In terms of assembly, tetramer of two alpha and two beta subunits. Requires Mg(2+) as cofactor.

It is found in the cytoplasm. It carries out the reaction tRNA(Phe) + L-phenylalanine + ATP = L-phenylalanyl-tRNA(Phe) + AMP + diphosphate + H(+). This is Phenylalanine--tRNA ligase alpha subunit from Halobacterium salinarum (strain ATCC 29341 / DSM 671 / R1).